Reading from the N-terminus, the 209-residue chain is Ion-translocating oxidoreductase complex subunit G (209 aa).

The chain crosses the membrane as a helical span at residues 9 to 29 (GITLALFAAGATGLTAVVNSL). Thr-175 is modified (FMN phosphoryl threonine).

This sequence belongs to the RnfG family. As to quaternary structure, the complex is composed of six subunits: RnfA, RnfB, RnfC, RnfD, RnfE and RnfG. It depends on FMN as a cofactor.

It localises to the cell inner membrane. In terms of biological role, part of a membrane-bound complex that couples electron transfer with translocation of ions across the membrane. This is Ion-translocating oxidoreductase complex subunit G from Yersinia pestis.